We begin with the raw amino-acid sequence, 63 residues long: uncharacterized protein (63 aa).

The helical transmembrane segment at 3 to 23 threads the bilayer; that stretch reads IIYIILGFLSLAIGIIGIFPS.

It is found in the membrane. This is an uncharacterized protein from Haemophilus influenzae (strain ATCC 51907 / DSM 11121 / KW20 / Rd).